A 661-amino-acid chain; its full sequence is WD repeat-containing protein 26 (661 aa).

The span at 1–27 (MQANGAGGGGGGGGGGGGGGGGGGGQG) shows a compositional bias: gly residues. Disordered stretches follow at residues 1–70 (MQAN…ASNN) and 99–118 (TAASSSLATPELGSSLKKKK). Composition is skewed to low complexity over residues 56–70 (ANGLLPSAPSAASNN) and 99–113 (TAASSSLATPELGSS). Phosphoserine occurs at positions 121 and 123. In terms of domain architecture, LisH spans 123–155 (SDEDVIRLIGQHLNGLGLNQTVDLLMQESGCRL). Residues 156–231 (EHPSATKFRN…EYLEDGKVLE (76 aa)) form the CTLH domain. 6 WD repeats span residues 353-392 (EHCNEVWFCKFSNDGTKLATGSKDTTVIIWQVDPDTHLLK), 399-438 (GHAYGVSYIAWSPDDNYLVACGPDDCSELWLWNVQTGELR), 444-484 (SHED…DSWE), 524-563 (QEDHPIMSFTISKNGRLALLNVATQGVHLWDLQDRVLVRK), 566-608 (GVTQ…PIAE), and 611-651 (GHTR…DHQN).

In terms of assembly, forms homooligomers. Identified in the CTLH complex that contains GID4, RANBP9 and/or RANBP10, MKLN1, MAEA, RMND5A (or alternatively its paralog RMND5B), GID8, ARMC8, WDR26 and YPEL5. Within this complex, MAEA, RMND5A (or alternatively its paralog RMND5B), GID8, WDR26, and RANBP9 and/or RANBP10 form the catalytic core, while GID4, MKLN1, ARMC8 and YPEL5 have ancillary roles. Interacts with DDB1-CUL4A/B E3 ligase complexes. Forms a complex composed of at least WDR26, a G-beta:gamma unit, and PLCB2. Interacts with AXIN1. In terms of tissue distribution, broadly expressed, with highest levels in heart and skeletal muscle.

Its subcellular location is the cytoplasm. It is found in the nucleus. The protein localises to the mitochondrion. Its function is as follows. G-beta-like protein involved in cell signal transduction. Acts as a negative regulator in MAPK signaling pathway. Functions as a scaffolding protein to promote G beta:gamma-mediated PLCB2 plasma membrane translocation and subsequent activation in leukocytes. Core component of the CTLH E3 ubiquitin-protein ligase complex that selectively accepts ubiquitin from UBE2H and mediates ubiquitination and subsequent proteasomal degradation of the transcription factor HBP1. Acts as a negative regulator of the canonical Wnt signaling pathway through preventing ubiquitination of beta-catenin CTNNB1 by the beta-catenin destruction complex, thus negatively regulating CTNNB1 degradation. Serves as a scaffold to coordinate PI3K/AKT pathway-driven cell growth and migration. Protects cells from oxidative stress-induced apoptosis via the down-regulation of AP-1 transcriptional activity as well as by inhibiting cytochrome c release from mitochondria. Also protects cells by promoting hypoxia-mediated autophagy and mitophagy. This chain is WD repeat-containing protein 26 (WDR26), found in Homo sapiens (Human).